The primary structure comprises 555 residues: Solute carrier family 22 member 2 (555 aa).

The Cytoplasmic portion of the chain corresponds to 1 to 22 (MPTTVDDVLEHGGEFHFFQKQM). A helical membrane pass occupies residues 23–43 (FFLLALLSATFAPIYVGIVFL). Residues 44–150 (GFTPDHRCRS…LVCANSWMLD (107 aa)) are Extracellular-facing. N-linked (GlcNAc...) asparagine glycosylation is present at N72. A helical transmembrane segment spans residues 151-171 (LFQSSVNVGFFIGSMSIGYIA). Over 172–177 (DRFGRK) the chain is Cytoplasmic. Residues 178-198 (LCLLTTVLINAAAGVLMAISP) traverse the membrane as a helical segment. Topologically, residues 199–208 (TYTWMLIFRL) are extracellular. Residues 209 to 229 (IQGLVSKAGWLIGYILITEFV) traverse the membrane as a helical segment. Residues 230 to 238 (GRRYRRTVG) lie on the Cytoplasmic side of the membrane. Residues 239–259 (IFYQVAYTVGLLVLAGVAYAL) form a helical membrane-spanning segment. The Extracellular segment spans residues 260 to 263 (PHWR). Residues 264 to 284 (WLQFTVSLPNFFFLLYYWCIP) form a helical membrane-spanning segment. The Proline-rich sequence signature appears at 284–288 (PESPR). Residues 285–348 (ESPRWLISQN…VRTPQIRKHT (64 aa)) are Cytoplasmic-facing. Residues 349 to 369 (MILMYNWFTSSVLYQGLIMHM) form a helical membrane-spanning segment. The Extracellular segment spans residues 370 to 375 (GLAGDN). Residues 376-396 (IYLDFFYSALVEFPAAFMIIL) form a helical membrane-spanning segment. The Cytoplasmic segment spans residues 397–414 (TIDRIGRRYPWAASNMVA). The chain crosses the membrane as a helical span at residues 415-435 (GAACLASVFIPGDLQWLKIII). Residues 436–441 (SCLGRM) lie on the Extracellular side of the membrane. A helical transmembrane segment spans residues 442 to 462 (GITMAYEIVCLVNAELYPTFI). The Cytoplasmic segment spans residues 463-464 (RN). A helical transmembrane segment spans residues 465–485 (LGVHICSSMCDIGGIITPFLV). The Extracellular segment spans residues 486–494 (YRLTNIWLE). A helical transmembrane segment spans residues 495–515 (LPLMVFGVLGLVAGGLVLLLP). Over 516-555 (ETKGKALPETIEEAENMQRPRKNKEKMIYLQVQKLDIPLN) the chain is Cytoplasmic.

Belongs to the major facilitator (TC 2.A.1) superfamily. Organic cation transporter (TC 2.A.1.19) family. Tyrosine phosphorylated by tyrosine-protein kinase YES1. Mainly expressed in kidney, in the cortex and medulla. Localized in testis, mostly to peritubular myoid cells and Leydig cells and also detected along the basal membrane of Sertoli cells. Expressed in brain, in neurons of the cerebral cortex and in various subcortical nuclei. In the brain, also detected in the dopaminergic regions of the substantia nigra. Expressed in tracheal and bronchial ciliated epithelium in the respiratory tract. Also detected in secretory phase endometrium, in scattered stromal cells. Expressed in spleen, placenta, small intestine and spinal cord. Weakly expressed in prostate, uterus and lung. As to expression, mainly expressed in kidney, bone marrow and testis. Expressed in colon, skeletal muscle, spinal cord, placenta and liver.

The protein localises to the basolateral cell membrane. Its subcellular location is the basal cell membrane. It is found in the apical cell membrane. It carries out the reaction (R)-noradrenaline(out) = (R)-noradrenaline(in). The catalysed reaction is (R)-adrenaline(out) = (R)-adrenaline(in). It catalyses the reaction serotonin(out) = serotonin(in). The enzyme catalyses dopamine(out) = dopamine(in). It carries out the reaction histamine(out) = histamine(in). The catalysed reaction is thiamine(in) = thiamine(out). It catalyses the reaction creatinine(in) = creatinine(out). The enzyme catalyses 1-methylnicotinamide(out) = 1-methylnicotinamide(in). It carries out the reaction guanidine(out) = guanidine(in). The catalysed reaction is choline(out) = choline(in). It catalyses the reaction agmatine(out) = agmatine(in). The enzyme catalyses putrescine(out) = putrescine(in). It carries out the reaction spermidine(in) = spermidine(out). The catalysed reaction is tyramine(in) = tyramine(out). It catalyses the reaction L-histidyl-L-proline diketopiperazine(in) = L-histidyl-L-proline diketopiperazine(out). The enzyme catalyses (R)-salsolinol(in) = (R)-salsolinol(out). It carries out the reaction N-methyl-(R)-salsolinol(in) = N-methyl-(R)-salsolinol(out). The catalysed reaction is acetylcholine(in) = acetylcholine(out). It catalyses the reaction prostaglandin F2alpha(out) = prostaglandin F2alpha(in). The enzyme catalyses prostaglandin E2(out) = prostaglandin E2(in). Tyrosine phosphorylation of the transporter leads to activation of the transport activity. TEA uptake is activated by tyrosine phosphorylation. Inhibited by cGMP, most likely through a cGMP-binding protein that interacts with OCT2. Functionally, electrogenic voltage-dependent transporter that mediates the transport of a variety of organic cations such as endogenous bioactive amines, cationic drugs and xenobiotics. Functions as a Na(+)-independent, bidirectional uniporter. Cation cellular uptake or release is driven by the electrochemical potential, i.e. membrane potential and concentration gradient. However, may also engage electroneutral cation exchange when saturating concentrations of cation substrates are reached. Predominantly expressed at the basolateral membrane of hepatocytes and proximal tubules and involved in the uptake and disposition of cationic compounds by hepatic and renal clearance from the blood flow. Implicated in monoamine neurotransmitters uptake such as histamine, dopamine, adrenaline/epinephrine, noradrenaline/norepinephrine, serotonin and tyramine, thereby supporting a physiological role in the central nervous system by regulating interstitial concentrations of neurotransmitters. Also capable of transporting dopaminergic neuromodulators cyclo(his-pro), salsolinol and N-methyl-salsolinol, thereby involved in the maintenance of dopaminergic cell integrity in the central nervous system. Mediates the bidirectional transport of acetylcholine (ACh) at the apical membrane of ciliated cell in airway epithelium, thereby playing a role in luminal release of ACh from bronchial epithelium. Also transports guanidine and endogenous monoamines such as vitamin B1/thiamine, creatinine and N-1-methylnicotinamide (NMN). Mediates the uptake and efflux of quaternary ammonium compound choline. Mediates the bidirectional transport of polyamine agmatine and the uptake of polyamines putrescine and spermidine. Able to transport non-amine endogenous compounds such as prostaglandin E2 (PGE2) and prostaglandin F2-alpha (PGF2-alpha). Also involved in the uptake of xenobiotic 4-(4-(dimethylamino)styryl)-N-methylpyridinium (ASP). May contribute to regulate the transport of organic compounds in testis across the blood-testis-barrier. Its function is as follows. In contrast with isoform 1, not able to transport guanidine, creatinine, cimetidine and metformin. This is Solute carrier family 22 member 2 from Homo sapiens (Human).